The following is a 152-amino-acid chain: Large ribosomal subunit protein uL30 (152 aa).

The protein belongs to the universal ribosomal protein uL30 family. As to quaternary structure, part of the 50S ribosomal subunit.

This chain is Large ribosomal subunit protein uL30, found in Methanosphaera stadtmanae (strain ATCC 43021 / DSM 3091 / JCM 11832 / MCB-3).